The sequence spans 175 residues: ATP synthase subunit b (175 aa).

A helical transmembrane segment spans residues 22–44; the sequence is MLVQLFFFLILLALLKKFAWGPL.

This sequence belongs to the ATPase B chain family. As to quaternary structure, F-type ATPases have 2 components, F(1) - the catalytic core - and F(0) - the membrane proton channel. F(1) has five subunits: alpha(3), beta(3), gamma(1), delta(1), epsilon(1). F(0) has three main subunits: a(1), b(2) and c(10-14). The alpha and beta chains form an alternating ring which encloses part of the gamma chain. F(1) is attached to F(0) by a central stalk formed by the gamma and epsilon chains, while a peripheral stalk is formed by the delta and b chains.

The protein localises to the cell membrane. F(1)F(0) ATP synthase produces ATP from ADP in the presence of a proton or sodium gradient. F-type ATPases consist of two structural domains, F(1) containing the extramembraneous catalytic core and F(0) containing the membrane proton channel, linked together by a central stalk and a peripheral stalk. During catalysis, ATP synthesis in the catalytic domain of F(1) is coupled via a rotary mechanism of the central stalk subunits to proton translocation. Its function is as follows. Component of the F(0) channel, it forms part of the peripheral stalk, linking F(1) to F(0). The chain is ATP synthase subunit b from Oceanobacillus iheyensis (strain DSM 14371 / CIP 107618 / JCM 11309 / KCTC 3954 / HTE831).